We begin with the raw amino-acid sequence, 194 residues long: Recombination protein RecR (194 aa).

The segment at 53 to 68 (CEICFNLDVTSPCSIC) adopts a C4-type zinc-finger fold. In terms of domain architecture, Toprim spans 76 to 171 (SLLCIVEELG…KVTRLACGIP (96 aa)).

This sequence belongs to the RecR family.

Its function is as follows. May play a role in DNA repair. It seems to be involved in an RecBC-independent recombinational process of DNA repair. It may act with RecF and RecO. The protein is Recombination protein RecR of Anaplasma phagocytophilum (strain HZ).